Here is a 385-residue protein sequence, read N- to C-terminus: UDP-N-acetylglucosamine--N-acetylmuramyl-(pentapeptide) pyrophosphoryl-undecaprenol N-acetylglucosamine transferase (385 aa).

Residues 24 to 26 (TAG), asparagine 143, arginine 180, serine 214, and glutamine 310 contribute to the UDP-N-acetyl-alpha-D-glucosamine site.

The protein belongs to the glycosyltransferase 28 family. MurG subfamily.

The protein localises to the cell membrane. The catalysed reaction is di-trans,octa-cis-undecaprenyl diphospho-N-acetyl-alpha-D-muramoyl-L-alanyl-D-glutamyl-meso-2,6-diaminopimeloyl-D-alanyl-D-alanine + UDP-N-acetyl-alpha-D-glucosamine = di-trans,octa-cis-undecaprenyl diphospho-[N-acetyl-alpha-D-glucosaminyl-(1-&gt;4)]-N-acetyl-alpha-D-muramoyl-L-alanyl-D-glutamyl-meso-2,6-diaminopimeloyl-D-alanyl-D-alanine + UDP + H(+). It participates in cell wall biogenesis; peptidoglycan biosynthesis. In terms of biological role, cell wall formation. Catalyzes the transfer of a GlcNAc subunit on undecaprenyl-pyrophosphoryl-MurNAc-pentapeptide (lipid intermediate I) to form undecaprenyl-pyrophosphoryl-MurNAc-(pentapeptide)GlcNAc (lipid intermediate II). The sequence is that of UDP-N-acetylglucosamine--N-acetylmuramyl-(pentapeptide) pyrophosphoryl-undecaprenol N-acetylglucosamine transferase from Mycolicibacterium smegmatis (strain ATCC 700084 / mc(2)155) (Mycobacterium smegmatis).